The sequence spans 229 residues: Ribonuclease T (229 aa).

Positions 23–197 (VIIDVETAGF…YDTERTAKLF (175 aa)) constitute an Exonuclease domain. The Mg(2+) site is built by aspartate 26, glutamate 28, histidine 184, and aspartate 189. Residue histidine 184 is the Proton donor/acceptor of the active site.

The protein belongs to the RNase T family. Homodimer. The cofactor is Mg(2+).

Trims short 3' overhangs of a variety of RNA species, leaving a one or two nucleotide 3' overhang. Responsible for the end-turnover of tRNA: specifically removes the terminal AMP residue from uncharged tRNA (tRNA-C-C-A). Also appears to be involved in tRNA biosynthesis. The sequence is that of Ribonuclease T from Haemophilus influenzae (strain 86-028NP).